We begin with the raw amino-acid sequence, 412 residues long: MDRRKLIFGKFWLFGLLNNVLYVVILAAAVDIVGPTLPKSLILLADILPSFLVKLVAPFFIDRVEYHYRIWSLIALSGFGMLLVASGRLGVCIVGIVLASISSGVGEITFLQLTHYFSHVALNGWSSGTGGAGLAGSFLYMLLTSILKIPVSRSLLLFSILPIGFLLYFTLQVERTAYEPLASGHFMEAEDNSGSVISLEAPRTTVDNARDCASRPRLAALRERIEVTMRRLKVLVVPYMIPLSTVYLFEYLINQGVSPTLMFPIHEGYGTSQLFHKYRDIYVAYGTLYQLGVFISRSSGSWVRIRGLYLLSVLQFLNLVILLIQSWYYVIHSVWVIMAIVLYEGLLGGASYVNSFLNISEDVPLAEREFSLGAVSISDSSGTLVAAFIGILLEPVLCSHQVKTGRPWCQLE.

A signal peptide spans 1–29 (MDRRKLIFGKFWLFGLLNNVLYVVILAAA). 9 helical membrane passes run 41–61 (LILL…PFFI), 70–90 (IWSL…GRLG), 91–111 (VCIV…ITFL), 131–151 (GAGL…KIPV), 154–174 (SLLL…LQVE), 234–254 (VLVV…YLIN), 281–300 (IYVA…RSSG), 307–329 (GLYL…SWYY), and 334–356 (VWVI…VNSF).

Belongs to the battenin family.

The protein resides in the vacuole membrane. Functionally, involved in vacuolar transport and vacuole pH homeostasis. Also required for cytokinesis. This Eremothecium gossypii (strain ATCC 10895 / CBS 109.51 / FGSC 9923 / NRRL Y-1056) (Yeast) protein is Protein BTN1 (BTN1).